The following is a 223-amino-acid chain: Membrane protein (223 aa).

At 1–18 (MAENCTLDSEQAVLLFKE) the chain is on the virion surface side. A helical transmembrane segment spans residues 19 to 39 (YNLFITAFLLFLTILLQYGYA). At 40–49 (TRSRTIYILK) the chain is on the intravirion side. Residues 50 to 70 (MIVLWCFWPLNIAVGVISCIY) form a helical membrane-spanning segment. The Virion surface portion of the chain corresponds to 71-75 (PPNTG). A helical membrane pass occupies residues 76-96 (GLVAAIILTVFACLSFVGYWI). The Intravirion segment spans residues 97–223 (QSCRLFKRCR…VATGGSSLYT (127 aa)).

This sequence belongs to the gammacoronaviruses M protein family. As to quaternary structure, homomultimer. Interacts with envelope E protein in the budding compartment of the host cell, which is located between endoplasmic reticulum and the Golgi complex. Forms a complex with HE and S proteins. Interacts with nucleocapsid N protein. This interaction probably participates in RNA packaging into the virus.

The protein localises to the virion membrane. It is found in the host Golgi apparatus membrane. Functionally, component of the viral envelope that plays a central role in virus morphogenesis and assembly via its interactions with other viral proteins. This chain is Membrane protein, found in Gallus gallus (Chicken).